A 566-amino-acid chain; its full sequence is Bacillolysin (566 aa).

Residues 1-27 form the signal peptide; sequence MKKKSLALVLATGMAVTTFGGTGSAFA. Residues 28-249 constitute a propeptide, activation peptide; that stretch reads DSKNVLSTKK…KQDAKAVVKP (222 aa). Ca(2+)-binding residues include D307, D309, V311, and D388. H392 lines the Zn(2+) pocket. E393 is a catalytic residue. Positions 396 and 416 each coordinate Zn(2+). Positions 427, 433, 435, 437, 440, 443, 444, 447, and 450 each coordinate Ca(2+). Residue H481 is the Proton donor of the active site.

Belongs to the peptidase M4 family. The cofactor is Ca(2+). Zn(2+) serves as cofactor.

Its subcellular location is the secreted. It carries out the reaction Similar, but not identical, to that of thermolysin.. Functionally, extracellular zinc metalloprotease. The sequence is that of Bacillolysin (npr) from Bacillus cereus.